We begin with the raw amino-acid sequence, 126 residues long: Glycine cleavage system H protein (126 aa).

Residues 23 to 105 (AATVGITDHA…YGEGWLLRVR (83 aa)) enclose the Lipoyl-binding domain. Lys64 carries the N6-lipoyllysine modification.

The protein belongs to the GcvH family. In terms of assembly, the glycine cleavage system is composed of four proteins: P, T, L and H. Requires (R)-lipoate as cofactor.

Its function is as follows. The glycine cleavage system catalyzes the degradation of glycine. The H protein shuttles the methylamine group of glycine from the P protein to the T protein. In Rubrobacter xylanophilus (strain DSM 9941 / JCM 11954 / NBRC 16129 / PRD-1), this protein is Glycine cleavage system H protein.